Consider the following 138-residue polypeptide: Small ribosomal subunit protein uS9c (138 aa).

It belongs to the universal ribosomal protein uS9 family.

The protein localises to the plastid. It localises to the chloroplast. The protein is Small ribosomal subunit protein uS9c (rps9) of Trieres chinensis (Marine centric diatom).